Consider the following 388-residue polypeptide: 5-hydroxytryptamine receptor 4 (388 aa).

Over 1–19 (MDKLDANVSSEEGFGSVEK) the chain is Extracellular. The N-linked (GlcNAc...) asparagine glycan is linked to N7. Residues 20–44 (VVLLTFLSTVILMAILGNLLVMVAV) form a helical membrane-spanning segment. Over 45 to 54 (CWDRQLRKIK) the chain is Cytoplasmic. The chain crosses the membrane as a helical span at residues 55–78 (TNYFIVSLAFADLLVSVLVMPFGA). Residues 79 to 92 (IELVQDIWIYGEVF) are Extracellular-facing. The helical transmembrane segment at 93-117 (CLVRTSLDVLLTTASIFHLCCISLD) threads the bilayer. Residues C93 and C184 are joined by a disulfide bond. D100 provides a ligand contact to serotonin. The Cytoplasmic portion of the chain corresponds to 118–133 (RYYAICCQPLVYRNKM). Residues 134-157 (TPLRIALMLGGCWVIPTFISFLPI) form a helical membrane-spanning segment. The Extracellular portion of the chain corresponds to 158-188 (MQGWNNIGIIDLIEKRKFNQNSNSTYCVFMV). Residues 189 to 212 (NKPYAITCSVVAFYIPFLLMVLAY) traverse the membrane as a helical segment. The Cytoplasmic segment spans residues 213–257 (YRIYVTAKEHAHQIQMLQRAGASSESRPQSADQHSTHRMRTETKA). The chain crosses the membrane as a helical span at residues 258–283 (AKTLCIIMGCFCLCWAPFFVTNIVDP). Residue N279 participates in serotonin binding. Over 284 to 290 (FIDYTVP) the chain is Extracellular. A helical membrane pass occupies residues 291–314 (GQVWTAFLWLGYINSGLNPFLYAF). The Cytoplasmic segment spans residues 315–388 (LNKSFRRAFL…PLVAAQPSDT (74 aa)).

Belongs to the G-protein coupled receptor 1 family. Interacts (via C-terminus 330-346 AA) with GRK5; this interaction is promoted by 5-HT (serotonin). As to quaternary structure, interacts with MAGI2, MPP3, NHERF1 and SNX27 isoforms 1 and 2. Forms a complex including NHERF1 and EZR. In terms of assembly, interacts with PATJ, NOS1 and SEC23A. As to expression, expressed in ileum, brain, and atrium, but not in the ventricle. In terms of tissue distribution, mainly expressed in atria and cardiac ventricle. Expressed in all cardiovascular tissues analyzed.

It localises to the cell membrane. It is found in the endosome membrane. Functionally, G-protein coupled receptor for 5-hydroxytryptamine (serotonin), a biogenic hormone that functions as a neurotransmitter, a hormone and a mitogen. Ligand binding causes a conformation change that triggers signaling via guanine nucleotide-binding proteins (G proteins) and modulates the activity of downstream effectors. HTR4 is coupled to G(s) G alpha proteins and mediates activation of adenylate cyclase activity. The chain is 5-hydroxytryptamine receptor 4 from Homo sapiens (Human).